We begin with the raw amino-acid sequence, 455 residues long: MGLSVIILAAGQGKRMASSTPKILHPLGGIPLLERVVNTARLLNPHTIHVVYGNGGSHVREKLNYLPVHWIEQSQPLGTGHAVLQAIPFCQNEDRVLILYGDVPLISPKTLNSLLENTPSNGLGVVVAELPDPTGLGRIIRDDFGNILSIVEHKDAEEHQLKIREINTGIMTTTAMNLKKWLPQLNNNNCQKEYYLTDTVALAVAEGCPVGGVAAQCCEEVQGVNDRWELTKLERYYQRLMAKKLSLAGVTIIDPERFDARGENIEIAPDVVIDVNVILEGNVQLDRNVRIGPNVILKNTTVGENTEIHANSVIEAAVIKANCSVGPFARLRPGSVLEEGAKVGNFVEMKKTTLGRGSKANHLTYLGDTIIGKNVNVGAGTITCNYDGANKWQTKIEDGAFIGSNVALVAPLTVGKNATIGAGSTLSQDAPPDQLTVARERQRTIKGWHRPTKKE.

Residues 1–227 (MGLSVIILAA…CEEVQGVNDR (227 aa)) form a pyrophosphorylase region. UDP-N-acetyl-alpha-D-glucosamine contacts are provided by residues 8–11 (LAAG), K22, Q73, 78–79 (GT), 100–102 (YGD), G137, E152, N167, and N225. D102 is a Mg(2+) binding site. Position 225 (N225) interacts with Mg(2+). Residues 228–248 (WELTKLERYYQRLMAKKLSLA) form a linker region. The tract at residues 249–455 (GVTIIDPERF…KGWHRPTKKE (207 aa)) is N-acetyltransferase. UDP-N-acetyl-alpha-D-glucosamine-binding residues include R332 and K350. H362 serves as the catalytic Proton acceptor. UDP-N-acetyl-alpha-D-glucosamine-binding residues include Y365 and N376. Acetyl-CoA is bound by residues A379, 385 to 386 (NY), S404, A422, and R439.

The protein in the N-terminal section; belongs to the N-acetylglucosamine-1-phosphate uridyltransferase family. In the C-terminal section; belongs to the transferase hexapeptide repeat family. Homotrimer. Mg(2+) serves as cofactor.

The protein localises to the cytoplasm. It catalyses the reaction alpha-D-glucosamine 1-phosphate + acetyl-CoA = N-acetyl-alpha-D-glucosamine 1-phosphate + CoA + H(+). The enzyme catalyses N-acetyl-alpha-D-glucosamine 1-phosphate + UTP + H(+) = UDP-N-acetyl-alpha-D-glucosamine + diphosphate. The protein operates within nucleotide-sugar biosynthesis; UDP-N-acetyl-alpha-D-glucosamine biosynthesis; N-acetyl-alpha-D-glucosamine 1-phosphate from alpha-D-glucosamine 6-phosphate (route II): step 2/2. It participates in nucleotide-sugar biosynthesis; UDP-N-acetyl-alpha-D-glucosamine biosynthesis; UDP-N-acetyl-alpha-D-glucosamine from N-acetyl-alpha-D-glucosamine 1-phosphate: step 1/1. Its pathway is bacterial outer membrane biogenesis; LPS lipid A biosynthesis. Functionally, catalyzes the last two sequential reactions in the de novo biosynthetic pathway for UDP-N-acetylglucosamine (UDP-GlcNAc). The C-terminal domain catalyzes the transfer of acetyl group from acetyl coenzyme A to glucosamine-1-phosphate (GlcN-1-P) to produce N-acetylglucosamine-1-phosphate (GlcNAc-1-P), which is converted into UDP-GlcNAc by the transfer of uridine 5-monophosphate (from uridine 5-triphosphate), a reaction catalyzed by the N-terminal domain. In Coxiella burnetii (strain RSA 493 / Nine Mile phase I), this protein is Bifunctional protein GlmU.